Here is a 607-residue protein sequence, read N- to C-terminus: MEVPTARLLLLLLLGAWAPAPESASPEAPLLVNEDVKRTVDLSSHLAKVTAEVVLAHPGGGSTARAASFLLALEPELEARLAHLGVQVKGEDEEENNLEVRETKIKGKSGRFFTVKLPVALDPGAKVSVVVETVYTHVLQPYPTQITQSEKQFVVFEGNHYFYSPYPTKTQTMRVKLASRNVESYTKLGNPTRSEDLLDYGPFRDIPAYSQDTFKVHYENNSPFLTITSMTRVIEVSHWGNIAVEENVDLKHTGAVLKGPFSRYDYQRQPDSGIASIRSFKTILPAAAQDVYYRDEIGNVSTSHLLILDDSVEMEIRPRFPLFGGWKTHYIVGYNLPSYEYLYNLGDQYALKMRFVDHVFDEQVIDSLTVKIILPEGAKNIQVDSPYEISRAPDELHYTYLDTFGRPVIVAYKKNLVEQHIQDIVVHYTFNKVLMLQEPLLVVAAFYILFFTVIIYVRLDFSITKDPAAEARMKVACITEQVLTLVNKRIGLYRHFDETINRYKQSRDVSTLNSGKKSLETEHKALTSEIASLQSRLKTEGSDLCDKVSEMQKLDAQVKELVLKSAVEAERLVAGKLKKDTYIENEKLISGKRQELVTKIDHILDAL.

The signal sequence occupies residues 1–24; the sequence is MEVPTARLLLLLLLGAWAPAPESA. Residues 25-434 lie on the Lumenal side of the membrane; the sequence is SPEAPLLVNE…VVHYTFNKVL (410 aa). An N6-acetyllysine modification is found at Lys187. Residue Asn299 is glycosylated (N-linked (GlcNAc...) asparagine). A helical membrane pass occupies residues 435–455; the sequence is MLQEPLLVVAAFYILFFTVII. Topologically, residues 456–607 are cytoplasmic; it reads YVRLDFSITK…TKIDHILDAL (152 aa). Lys538 carries the post-translational modification N6-acetyllysine; alternate. Lys538 participates in a covalent cross-link: Glycyl lysine isopeptide (Lys-Gly) (interchain with G-Cter in SUMO2); alternate.

This sequence belongs to the OST1 family. Component of the oligosaccharyltransferase (OST) complex. OST exists in two different complex forms which contain common core subunits RPN1, RPN2, OST48, OST4, DAD1 and TMEM258, either STT3A or STT3B as catalytic subunits, and form-specific accessory subunits. STT3A complex assembly occurs through the formation of 3 subcomplexes. Subcomplex 1 contains RPN1 and TMEM258, subcomplex 2 contains the STT3A-specific subunits STT3A, DC2/OSTC, and KCP2 as well as the core subunit OST4, and subcomplex 3 contains RPN2, DAD1, and OST48. The STT3A complex can form stable complexes with the Sec61 complex or with both the Sec61 and TRAP complexes. Interacts with TMEM35A/NACHO. Ubiquitinated by the ECS(ASB11) complex. In terms of processing, ufmylated by UFL1 in response to endoplasmic reticulum stress, promoting reticulophagy of endoplasmic reticulum sheets.

The protein resides in the endoplasmic reticulum membrane. It participates in protein modification; protein glycosylation. Functionally, subunit of the oligosaccharyl transferase (OST) complex that catalyzes the initial transfer of a defined glycan (Glc(3)Man(9)GlcNAc(2) in eukaryotes) from the lipid carrier dolichol-pyrophosphate to an asparagine residue within an Asn-X-Ser/Thr consensus motif in nascent polypeptide chains, the first step in protein N-glycosylation. N-glycosylation occurs cotranslationally and the complex associates with the Sec61 complex at the channel-forming translocon complex that mediates protein translocation across the endoplasmic reticulum (ER). All subunits are required for a maximal enzyme activity. This Canis lupus familiaris (Dog) protein is Dolichyl-diphosphooligosaccharide--protein glycosyltransferase subunit 1.